Consider the following 426-residue polypeptide: 3-phosphoshikimate 1-carboxyvinyltransferase (426 aa).

Positions 20, 21, and 25 each coordinate 3-phosphoshikimate. Lys-20 lines the phosphoenolpyruvate pocket. Gly-92 and Arg-120 together coordinate phosphoenolpyruvate. 4 residues coordinate 3-phosphoshikimate: Ser-166, Gln-168, Asp-312, and Lys-339. Residue Gln-168 coordinates phosphoenolpyruvate. Residue Asp-312 is the Proton acceptor of the active site. Arg-385 contacts phosphoenolpyruvate.

It belongs to the EPSP synthase family. Monomer.

It is found in the cytoplasm. The catalysed reaction is 3-phosphoshikimate + phosphoenolpyruvate = 5-O-(1-carboxyvinyl)-3-phosphoshikimate + phosphate. Its pathway is metabolic intermediate biosynthesis; chorismate biosynthesis; chorismate from D-erythrose 4-phosphate and phosphoenolpyruvate: step 6/7. Its function is as follows. Catalyzes the transfer of the enolpyruvyl moiety of phosphoenolpyruvate (PEP) to the 5-hydroxyl of shikimate-3-phosphate (S3P) to produce enolpyruvyl shikimate-3-phosphate and inorganic phosphate. This chain is 3-phosphoshikimate 1-carboxyvinyltransferase, found in Streptococcus suis (strain 98HAH33).